A 739-amino-acid chain; its full sequence is Death domain-associated protein 6 (739 aa).

Positions 1-60 (MATDDSIIVLDDDDEDEAAAQPGPSNLPPNPASTGPGPGLSQQATGLSEPRVDGGSSNSG) are disordered. Residues 1-166 (MATDDSIIVL…TTSEASGPNP (166 aa)) form a necessary for interaction with USP7 and ATRX region. Ser25 is subject to Phosphoserine. Lys148 is covalently cross-linked (Glycyl lysine isopeptide (Lys-Gly) (interchain with G-Cter in SUMO2)). A disordered region spans residues 155–191 (ASTTSEASGPNPPTEPPSDLTNTENTASEASRTRGSR). The segment covering 173–184 (DLTNTENTASEA) has biased composition (polar residues). 2 coiled-coil regions span residues 185 to 223 (SRTR…ELDD) and 364 to 403 (ARRL…RRAR). The segment at 189 to 423 (GSRRQIQRLE…PPQASSESGE (235 aa)) is interaction with histone H3.3. The residue at position 219 (Ser219) is a Phosphoserine. Residues 353–576 (GVDPALSDPT…SPVSQLAELE (224 aa)) are necessary for interaction with USP7. The short motif at 391–395 (KTEEG) is the Nuclear localization signal element. Disordered regions lie at residues 405 to 599 (LGTA…SLPT) and 611 to 688 (TSVN…VDSP). 2 positions are modified to phosphoserine: Ser418 and Ser430. A compositionally biased stretch (acidic residues) spans 441–499 (TDDDDDDDDDDDEDNEESEEEEEEEEEEKEATEDEDEDLEQLQEDQGGDEEEEGGDNEG). Residues 445-488 (DDDDDDDDEDNEESEEEEEEEEEEKEATEDEDEDLEQLQEDQGG) adopt a coiled-coil conformation. Phosphothreonine is present on Thr472. Ser502, Ser505, Ser507, and Ser515 each carry phosphoserine. Position 523 is a phosphothreonine (Thr523). 2 positions are modified to phosphoserine: Ser543 and Ser567. The segment covering 581–595 (PEERDISSPRKKSED) has biased composition (basic and acidic residues). Residues 611 to 620 (TSVNGRVSSH) are compositionally biased toward polar residues. A Nuclear localization signal motif is present at residues 622-628 (WRDASPP). Ser626 carries the post-translational modification Phosphoserine. The tract at residues 626–739 (SPPSKRFRKE…EEIIVLSDSD (114 aa)) is interaction with SPOP. A Glycyl lysine isopeptide (Lys-Gly) (interchain with G-Cter in SUMO1) cross-link involves residue Lys630. The span at 655–666 (QQDSGQNTSVQP) shows a compositional bias: polar residues. Residue Ser669 is modified to Phosphoserine; by HIPK1. Phosphoserine occurs at positions 687, 701, 736, and 738. Residues 732 to 739 (IIVLSDSD) form a sumo interaction motif (SIM) region.

Belongs to the DAXX family. Homomultimer. Interacts (via C-terminus) with TNFRSF6 (via death domain). Interacts with PAX5, SLC2A4/GLUT4, MAP3K5, TGFBR2, phosphorylated dimeric HSPB1/HSP27, CENPC, ETS1, sumoylated PML, UBE2I, MCRS1 and TP53. Interacts (via N-terminus) with HIPK2 and HIPK3. Interacts with HIPK1, which induces translocation from PML/POD/ND10 nuclear bodies to chromatin and enhances association with HDAC1. Interacts (non-phosphorylated) with PAX3, PAX7, DEK, HDAC1, HDAC2, HDAC3, acetylated histone H4 and histones H2A, H2B, H3, H3.3 and H4. Interacts with SPOP; mediating CUL3-dependent proteasomal degradation. Interacts with CBP; the interaction is dependent the sumoylation of CBP and suppresses CBP transcriptional activity via recruitment of HDAC2 directly in the complex with TP53 and HIPK2. Interacts with AXIN1; the interaction stimulates the interaction of DAXX with TP53, stimulates 'Ser-46' phosphorylation of TP53 on and induces cell death on UV irradiation. Interacts with MDM2; the interaction is direct. Interacts with USP7; the interaction is direct and independent of MDM2 and TP53. Part of a complex with DAXX, MDM2 and USP7 under non-stress conditions. Interacts (via N-terminus) with RASSF1 (via C-terminus); the interaction is independent of MDM2 and TP53; RASSF1 isoform A disrupts interactions among MDM2, DAXX and USP7, thus contributing to the efficient activation of TP53 by promoting MDM2 self-ubiquitination in cell-cycle checkpoint control in response to DNA damage. Interacts with ATRX to form the chromatin remodeling complex ATRX:DAXX. Interacts with HSF1 (via homotrimeric form preferentially); this interaction relieves homotrimeric HSF1 from repression of its transcriptional activity by HSP90-dependent multichaperone complex upon heat shock. Post-translationally, sumoylated with SUMO1 on multiple lysine residues. Repressor activity is down-regulated upon Ser-669 phosphorylation. Upon neuronal activation dephosphorylated by calcineurin in a Ca2+ dependent manner at Ser-669; dephosphorylation positively affects histone H3.3 loading and transcriptional activation. In terms of processing, polyubiquitinated; which is promoted by CUL3 and SPOP and results in proteasomal degradation. Ubiquitinated by MDM2; inducing its degradation. Deubiquitinated by USP7; leading to stabilize it.

It is found in the cytoplasm. The protein resides in the nucleus. It localises to the nucleoplasm. The protein localises to the PML body. Its subcellular location is the nucleolus. It is found in the chromosome. The protein resides in the centromere. Transcription corepressor known to repress transcriptional potential of several sumoylated transcription factors. Down-regulates basal and activated transcription. Its transcription repressor activity is modulated by recruiting it to subnuclear compartments like the nucleolus or PML/POD/ND10 nuclear bodies through interactions with MCSR1 and PML, respectively. Seems to regulate transcription in PML/POD/ND10 nuclear bodies together with PML and may influence TNFRSF6-dependent apoptosis thereby. Inhibits transcriptional activation of PAX3 and ETS1 through direct protein-protein interactions. Modulates PAX5 activity; the function seems to involve CREBBP. Acts as an adapter protein in a MDM2-DAXX-USP7 complex by regulating the RING-finger E3 ligase MDM2 ubiquitination activity. Under non-stress condition, in association with the deubiquitinating USP7, prevents MDM2 self-ubiquitination and enhances the intrinsic E3 ligase activity of MDM2 towards TP53, thereby promoting TP53 ubiquitination and subsequent proteasomal degradation. Upon DNA damage, its association with MDM2 and USP7 is disrupted, resulting in increased MDM2 autoubiquitination and consequently, MDM2 degradation, which leads to TP53 stabilization. Acts as a histone chaperone that facilitates deposition of histone H3.3. Acts as a targeting component of the chromatin remodeling complex ATRX:DAXX which has ATP-dependent DNA translocase activity and catalyzes the replication-independent deposition of histone H3.3 in pericentric DNA repeats outside S-phase and telomeres, and the in vitro remodeling of H3.3-containing nucleosomes. Does not affect the ATPase activity of ATRX but alleviates its transcription repression activity. Upon neuronal activation associates with regulatory elements of selected immediate early genes where it promotes deposition of histone H3.3 which may be linked to transcriptional induction of these genes. Required for the recruitment of histone H3.3:H4 dimers to PML-nuclear bodies (PML-NBs); the process is independent of ATRX and facilitated by ASF1A; PML-NBs are suggested to function as regulatory sites for the incorporation of newly synthesized histone H3.3 into chromatin. Proposed to mediate activation of the JNK pathway and apoptosis via MAP3K5 in response to signaling from TNFRSF6 and TGFBR2. Interaction with HSPB1/HSP27 may prevent interaction with TNFRSF6 and MAP3K5 and block DAXX-mediated apoptosis. In contrast, in lymphoid cells JNC activation and TNFRSF6-mediated apoptosis may not involve DAXX. Plays a role as a positive regulator of the heat shock transcription factor HSF1 activity during the stress protein response. This Mus musculus (Mouse) protein is Death domain-associated protein 6 (Daxx).